The sequence spans 887 residues: Probable alpha/beta-glucosidase agdC (887 aa).

An N-terminal signal peptide occupies residues 1–17; sequence MLRSLLLLAPMVGAAVA. Residues asparagine 171, asparagine 293, and asparagine 373 are each glycosylated (N-linked (GlcNAc...) asparagine). Residue aspartate 422 is the Nucleophile of the active site. The active site involves glutamate 425. The tract at residues 457 to 483 is disordered; the sequence is PRPLPGFPDDFQPPAASKRSVAKGSKV. Aspartate 571 (proton donor) is an active-site residue. 2 N-linked (GlcNAc...) asparagine glycosylation sites follow: asparagine 747 and asparagine 879.

It belongs to the glycosyl hydrolase 31 family.

It is found in the secreted. It catalyses the reaction Hydrolysis of terminal, non-reducing (1-&gt;4)-linked alpha-D-glucose residues with release of alpha-D-glucose.. The enzyme catalyses Hydrolysis of terminal, non-reducing beta-D-glucosyl residues with release of beta-D-glucose.. In terms of biological role, glucosidase involved in the degradation of cellulosic biomass. Has both alpha- and beta-glucosidase activity. The polypeptide is Probable alpha/beta-glucosidase agdC (agdC) (Aspergillus clavatus (strain ATCC 1007 / CBS 513.65 / DSM 816 / NCTC 3887 / NRRL 1 / QM 1276 / 107)).